Here is a 630-residue protein sequence, read N- to C-terminus: Transposase B from transposon PsiTn554 (630 aa).

Residues 216-302 (TYFKQLVKRY…ILEGLFSTLH (87 aa)) form the Core-binding (CB) domain. The Tyr recombinase domain maps to 326–513 (AKPRFIDEFV…FDETLKNEFT (188 aa)). Active-site residues include R363, K391, H465, R468, and H491. Y500 acts as the O-(3'-phospho-DNA)-tyrosine intermediate in catalysis.

The protein belongs to the 'phage' integrase family.

This is Transposase B from transposon PsiTn554 (tnpB) from Staphylococcus aureus.